A 790-amino-acid polypeptide reads, in one-letter code: Protein SEY1 (790 aa).

The Cytoplasmic portion of the chain corresponds to 1-692; it reads MELSEGELSH…KRSIVQHITQ (692 aa). The GB1/RHD3-type G domain maps to 55 to 284; that stretch reads GNNYHIISVF…VSNELFKPEY (230 aa). 65–72 is a GTP binding site; sequence GSQSTGKS. The helical transmembrane segment at 693-713 threads the bilayer; it reads IPYYIYLIILVLGWNEFMAII. Topologically, residues 714–716 are lumenal; that stretch reads RNP. A helical membrane pass occupies residues 717–737; the sequence is LFFSLSIVLGATVYVLYYLGL. Residues 738-790 are Cytoplasmic-facing; it reads LRPALVVAQRTMDEVIVMAKTKLREVLIDDHEVTGRQLNKMAGSKENIELDDM.

Belongs to the TRAFAC class dynamin-like GTPase superfamily. GB1/RHD3 GTPase family. RHD3 subfamily.

The protein localises to the endoplasmic reticulum membrane. Functionally, cooperates with the reticulon proteins and tubule-shaping DP1 family proteins to generate and maintain the structure of the tubular endoplasmic reticulum network. Has GTPase activity, which is required for its function in ER organization. The polypeptide is Protein SEY1 (Candida albicans (strain WO-1) (Yeast)).